We begin with the raw amino-acid sequence, 444 residues long: Putative F-box protein At1g64540 (444 aa).

The F-box domain maps to R4 to E50.

In Arabidopsis thaliana (Mouse-ear cress), this protein is Putative F-box protein At1g64540.